The sequence spans 528 residues: Peptide chain release factor 3 (528 aa).

Residues Ala-10–Met-279 enclose the tr-type G domain. GTP-binding positions include Ser-19–Thr-26, Asp-87–His-91, and Asn-141–Asp-144.

It belongs to the TRAFAC class translation factor GTPase superfamily. Classic translation factor GTPase family. PrfC subfamily.

The protein localises to the cytoplasm. Increases the formation of ribosomal termination complexes and stimulates activities of RF-1 and RF-2. It binds guanine nucleotides and has strong preference for UGA stop codons. It may interact directly with the ribosome. The stimulation of RF-1 and RF-2 is significantly reduced by GTP and GDP, but not by GMP. The polypeptide is Peptide chain release factor 3 (Escherichia coli O1:K1 / APEC).